We begin with the raw amino-acid sequence, 321 residues long: Malate dehydrogenase (321 aa).

Residues 10 to 15 (GSGMIG) and Asp34 contribute to the NAD(+) site. Substrate is bound by residues Arg83 and Arg89. Residues Asn96 and 119-121 (ITN) each bind NAD(+). Residues Asn121 and Arg152 each coordinate substrate. Catalysis depends on His176, which acts as the Proton acceptor.

It belongs to the LDH/MDH superfamily. MDH type 3 family.

The catalysed reaction is (S)-malate + NAD(+) = oxaloacetate + NADH + H(+). Its function is as follows. Catalyzes the reversible oxidation of malate to oxaloacetate. This chain is Malate dehydrogenase, found in Bartonella bacilliformis (strain ATCC 35685 / KC583 / Herrer 020/F12,63).